Reading from the N-terminus, the 744-residue chain is CCR4-NOT transcription complex subunit 10 (744 aa).

Basic and acidic residues predominate over residues 1-16; that stretch reads MAADKPADQGAEKHEG. Positions 1 to 25 are disordered; it reads MAADKPADQGAEKHEGTGQSSGITD. Alanine 2 carries the post-translational modification N-acetylalanine. The stretch at 74–107 forms a coiled coil; that stretch reads KSNQTTTDNLRQTLNQLKNQVHSAVEEMDGLDDV. A compositionally biased stretch (low complexity) spans 183-199; it reads NNNKNGKNETGNNNNKD. Disordered stretches follow at residues 183–204, 477–521, and 602–634; these read NNNK…SNHK, QDPK…PPSS, and VSLG…PQCY. A compositionally biased stretch (polar residues) spans 484–495; sequence GAKNSNQLGGNT. Low complexity predominate over residues 496–506; the sequence is ESSESSETCSS. A compositionally biased stretch (polar residues) spans 602–612; that stretch reads VSLGISSNEQD.

Belongs to the CNOT10 family. Component of the CCR4-NOT complex; distinct complexes seem to exist that differ in the participation of probably mutually exclusive catalytic subunits. CNOT10 and CNOT11 form a subcomplex docked to the CNOT1 scaffold.

The protein resides in the cytoplasm. It localises to the nucleus. In terms of biological role, component of the CCR4-NOT complex which is one of the major cellular mRNA deadenylases and is linked to various cellular processes including bulk mRNA degradation, miRNA-mediated repression, translational repression during translational initiation and general transcription regulation. Additional complex functions may be a consequence of its influence on mRNA expression. Is not required for association of CNOT7 to the CCR4-NOT complex. The sequence is that of CCR4-NOT transcription complex subunit 10 (CNOT10) from Macaca fascicularis (Crab-eating macaque).